Consider the following 182-residue polypeptide: UPF0148 protein VNG_2366C (182 aa).

The segment at 1-162 (MSNTDDGFDK…RASDADDPRT (162 aa)) is disordered. Basic and acidic residues-rich tracts occupy residues 7-33 (GFDK…ETAR) and 47-62 (DHCD…HDGE). The span at 105-122 (PDTSSSTAAATDDVPTAA) shows a compositional bias: low complexity. Positions 153 to 162 (RASDADDPRT) are enriched in basic and acidic residues.

It belongs to the UPF0148 family.

In Halobacterium salinarum (strain ATCC 700922 / JCM 11081 / NRC-1) (Halobacterium halobium), this protein is UPF0148 protein VNG_2366C.